The following is a 150-amino-acid chain: UPF0178 protein Sbal195_1808 (150 aa).

Belongs to the UPF0178 family.

This Shewanella baltica (strain OS195) protein is UPF0178 protein Sbal195_1808.